We begin with the raw amino-acid sequence, 286 residues long: Aminoglycoside N(3)-acetyltransferase VIII (286 aa).

This sequence belongs to the antibiotic N-acetyltransferase family.

It carries out the reaction a 2-deoxystreptamine antibiotic + acetyl-CoA = an N(3)-acetyl-2-deoxystreptamine antibiotic + CoA + H(+). Resistance to neomycin. The polypeptide is Aminoglycoside N(3)-acetyltransferase VIII (aacC8) (Streptomyces fradiae (Streptomyces roseoflavus)).